Here is a 562-residue protein sequence, read N- to C-terminus: Protein wntless (562 aa).

Residues 1–13 lie on the Cytoplasmic side of the membrane; that stretch reads MSGTILENLSGRK. A helical transmembrane segment spans residues 14-34; that stretch reads LSILVATLLLCQVLCFLLGGL. The Lumenal portion of the chain corresponds to 35-239; sequence YAPLPAGHVT…AIHQNGGFTQ (205 aa). Asn58 is a glycosylation site (N-linked (GlcNAc...) asparagine). Residues 240 to 260 form a helical membrane-spanning segment; sequence IWLLLKTMLFPFVVGIMIWFW. The Cytoplasmic portion of the chain corresponds to 261 to 270; it reads RRVHLLQRSP. The chain crosses the membrane as a helical span at residues 271 to 291; that stretch reads ALLEYMLIYLGAALTFLNLPL. At 292 to 311 the chain is on the lumenal side; it reads EYLSLVYEMPYMLLLSDIRQ. Residues 312–332 form a helical membrane-spanning segment; the sequence is GIFYAMLLTFWLVFAGEHMLI. Residues 333–344 are Cytoplasmic-facing; it reads QDAPNKSTIRSR. The chain crosses the membrane as a helical span at residues 345–365; it reads YWKHLSAVVVGCISLFVFDIC. Residues 366 to 390 are Lumenal-facing; that stretch reads ERGVQLRNPFYSIWTTPLGAKVAMT. The chain crosses the membrane as a helical span at residues 391–411; the sequence is FIVLAGVSAAIYFLFLCYMIW. Residues 412-441 are Cytoplasmic-facing; that stretch reads KVFRNIGDKRTSLPSMSQARRLHYEGLIYR. The chain crosses the membrane as a helical span at residues 442 to 462; that stretch reads FKFLMLATLVCAALTVAGFIM. The Lumenal segment spans residues 463-482; the sequence is GQMAEGQWDWNDNVAIQPTS. The helical transmembrane segment at 483–503 threads the bilayer; sequence AFLTGVYGMWNIYIFALLILY. Over 504 to 562 the chain is Cytoplasmic; the sequence is APSHKQWPAMHHSDETTQSNENIVASAASEEIEFSHLPSDSNPSEISSLTSFTRKVAFD.

This sequence belongs to the wntless family. Interacts with wg; in the Golgi. Interacts with Vps35, a component of the retromer complex; wls stability is regulated by Vps35.

Its subcellular location is the presynaptic cell membrane. The protein localises to the postsynaptic cell membrane. The protein resides in the cell membrane. It is found in the endoplasmic reticulum membrane. It localises to the endosome membrane. Its subcellular location is the golgi apparatus membrane. In terms of biological role, a segment polarity gene required for wingless (wg)-dependent patterning processes, acting in both wg-sending cells and wg-target cells. In non-neuronal cells wls directs wg secretion. The wls traffic loop encompasses the Golgi, the cell surface, an endocytic compartment and a retrograde route leading back to the Golgi, and involves clathrin-mediated endocytosis and the retromer complex (a conserved protein complex consisting of Vps35 and Vps26). In neuronal cells (the larval motorneuron NMJ), the wg signal moves across the synapse via the release of wls-containing exosome-like vesicles. Postsynaptic wls is required for the trafficking of fz2 through the fz2-interacting protein Grip. In Drosophila sechellia (Fruit fly), this protein is Protein wntless.